Consider the following 1481-residue polypeptide: RNA helicase aquarius (1481 aa).

Residues 1–416 (MAAPAQPKKI…LVSRHERRIS (416 aa)) form a helical region with structural similarity to ARM repeat domains region. The tract at residues 417–1481 (QIQQLNQMPL…DAESVPTETE (1065 aa)) is required for assembly of the IB complex. The interval 754 to 773 (RSGKGKKRKDADGEEDDTEE) is disordered. ATP is bound by residues glutamine 801, glutamine 806, and 826–831 (GTGKTD). The residue at position 1055 (lysine 1055) is an N6-acetyllysine. Acidic residues predominate over residues 1396 to 1414 (EEGEEGQSQETEMEAEEET). The segment at 1396–1481 (EEGEEGQSQE…DAESVPTETE (86 aa)) is disordered. Positions 1418–1448 (QGNLTPSPADASLSQETPAAQPDCSSQTEDT) are enriched in polar residues. Over residues 1455–1468 (ATAAEPVSAAAEAA) the composition is skewed to low complexity.

Belongs to the CWF11 family. Identified in the spliceosome C complex. Component of the XAB2 complex, a multimeric protein complex composed of XAB2, PRPF19, AQR, ZNF830, ISY1, and PPIE. Identified in a pentameric intron-binding (IB) complex composed of AQR, XAB2, ISY1, ZNF830 and PPIE that is incorporated into the spliceosome as a preassembled complex. The IB complex does not contain PRPF19. Within the spliceosome, interacts with SNRPA1, SF3B1, SF3B3, SF3A1 and SF3A2.

It localises to the nucleus. Its subcellular location is the nucleoplasm. The enzyme catalyses ATP + H2O = ADP + phosphate + H(+). Functionally, involved in pre-mRNA splicing as component of the spliceosome. Intron-binding spliceosomal protein required to link pre-mRNA splicing and snoRNP (small nucleolar ribonucleoprotein) biogenesis. Plays a key role in position-dependent assembly of intron-encoded box C/D small snoRNP, splicing being required for snoRNP assembly. May act by helping the folding of the snoRNA sequence. Binds to intron of pre-mRNAs in a sequence-independent manner, contacting the region between snoRNA and the branchpoint of introns (40 nucleotides upstream of the branchpoint) during the late stages of splicing. Has ATP-dependent RNA helicase activity and can unwind double-stranded RNA molecules with a 3' overhang (in vitro). In Mus musculus (Mouse), this protein is RNA helicase aquarius (Aqr).